Reading from the N-terminus, the 350-residue chain is Nuclear pore complex-interacting protein family member A1 (350 aa).

Residues 306 to 325 form a disordered region; the sequence is KTPPECLLTPLPPSAPPSVD.

Belongs to the NPIP family. In terms of assembly, may associate with the nuclear pore complex. Widely expressed.

It is found in the nucleus. The protein resides in the nuclear pore complex. Its subcellular location is the nucleus membrane. The chain is Nuclear pore complex-interacting protein family member A1 (NPIPA1) from Homo sapiens (Human).